Reading from the N-terminus, the 58-residue chain is ComX pheromone (58 aa).

The propeptide occupies 1–52; that stretch reads MKQDMIDYLMKNPQVLTKLENGEASLIGIPDKLIPSIVDIFNKKMTLSKKCK. W56 carries the 3'-geranyl-2',N2-cyclotryptophan; in strain RO-E-2 /NRRL B-23055 lipid modification.

Interacts directly with the sensor histidine kinase ComP and stimulates its activity. Trp-56 is modified by geranylation, which is essential for activity. Modified by the tryptophan prenyltransferase ComQ before export to the extracellular environment. The type of isoprenyl derivative differs among the different pherotypes and depends on ComX primary sequence.

It is found in the secreted. In terms of biological role, part of a major quorum-sensing system that regulates the development of genetic competence. Acts through the activation of the two-component regulatory system ComP/ComA composed of a sensor histidine kinase, ComP, and a response regulator, ComA. In Bacillus spizizenii (Bacillus subtilis subsp. spizizenii), this protein is ComX pheromone.